A 509-amino-acid chain; its full sequence is Maturase K (509 aa).

The protein belongs to the intron maturase 2 family. MatK subfamily.

It is found in the plastid. The protein resides in the chloroplast. Functionally, usually encoded in the trnK tRNA gene intron. Probably assists in splicing its own and other chloroplast group II introns. The sequence is that of Maturase K from Ibicella lutea (Yellow unicorn-plant).